A 92-amino-acid polypeptide reads, in one-letter code: Small integral membrane protein 12 (92 aa).

Residues 15 to 34 (YVTFPVAFVVGAVGYHLEWF) traverse the membrane as a helical segment.

The protein belongs to the SMIM12 family.

It is found in the membrane. The protein is Small integral membrane protein 12 (SMIM12) of Nomascus leucogenys (Northern white-cheeked gibbon).